The following is a 75-amino-acid chain: Translational regulator CsrA (75 aa).

This sequence belongs to the CsrA/RsmA family. As to quaternary structure, homodimer; the beta-strands of each monomer intercalate to form a hydrophobic core, while the alpha-helices form wings that extend away from the core.

The protein resides in the cytoplasm. A translational regulator that binds mRNA to regulate translation initiation and/or mRNA stability. Usually binds in the 5'-UTR at or near the Shine-Dalgarno sequence preventing ribosome-binding, thus repressing translation. Its main target seems to be the major flagellin gene, while its function is anatagonized by FliW. The sequence is that of Translational regulator CsrA from Alkaliphilus metalliredigens (strain QYMF).